Here is a 499-residue protein sequence, read N- to C-terminus: Probable dipeptidase B (499 aa).

Residue Cys26 is part of the active site.

It belongs to the peptidase C69 family.

It catalyses the reaction an L-aminoacyl-L-amino acid + H2O = 2 an L-alpha-amino acid. The polypeptide is Probable dipeptidase B (pepDB) (Streptococcus pyogenes serotype M18 (strain MGAS8232)).